Reading from the N-terminus, the 555-residue chain is Luciferin 2-monooxygenase (555 aa).

Residues M1–A11 form the signal peptide. VWFD domains are found at residues I80–K266 and G319–N494. 4 cysteine pairs are disulfide-bonded: C82–C222, C321–C454, C343–C493, and C352–C451. 2 N-linked (GlcNAc...) asparagine glycosylation sites follow: N186 and N408.

The cysteine residues presumably exist in intramolecular disulfide bridges. Post-translationally, the N-terminus is blocked.

It catalyses the reaction Cypridina luciferin + O2 = oxidized Cypridina luciferin + hnu + CO2. This Vargula hilgendorfii (Sea firefly) protein is Luciferin 2-monooxygenase.